Here is a 148-residue protein sequence, read N- to C-terminus: Ribosome maturation factor RimP (148 aa).

The protein belongs to the RimP family.

It is found in the cytoplasm. Required for maturation of 30S ribosomal subunits. This chain is Ribosome maturation factor RimP, found in Nautilia profundicola (strain ATCC BAA-1463 / DSM 18972 / AmH).